The primary structure comprises 21 residues: Fibrinogen beta chain (21 aa).

Pyrrolidone carboxylic acid is present on Gln-1. Positions 1–10 are enriched in acidic residues; that stretch reads QFPTDYDEGQ. Residues 1–21 are disordered; it reads QFPTDYDEGQDDRPKLGLGAR. A glycan (O-linked (GalNAc...) threonine) is linked at Thr-4. Tyr-6 carries the post-translational modification Sulfotyrosine.

Heterohexamer; disulfide linked. Contains 2 sets of 3 non-identical chains (alpha, beta and gamma). The 2 heterotrimers are in head to head conformation with the N-termini in a small central domain. Post-translationally, conversion of fibrinogen to fibrin is triggered by thrombin, which cleaves fibrinopeptides A and B from alpha and beta chains, and thus exposes the N-terminal polymerization sites responsible for the formation of the soft clot.

It localises to the secreted. Cleaved by the protease thrombin to yield monomers which, together with fibrinogen alpha (FGA) and fibrinogen gamma (FGG), polymerize to form an insoluble fibrin matrix. Fibrin has a major function in hemostasis as one of the primary components of blood clots. In addition, functions during the early stages of wound repair to stabilize the lesion and guide cell migration during re-epithelialization. Was originally thought to be essential for platelet aggregation, based on in vitro studies using anticoagulated blood. However subsequent studies have shown that it is not absolutely required for thrombus formation in vivo. Enhances expression of SELP in activated platelets. Maternal fibrinogen is essential for successful pregnancy. Fibrin deposition is also associated with infection, where it protects against IFNG-mediated hemorrhage. May also facilitate the antibacterial immune response via both innate and T-cell mediated pathways. This Bubalus bubalis (Domestic water buffalo) protein is Fibrinogen beta chain (FGB).